Here is a 408-residue protein sequence, read N- to C-terminus: Serine/threonine transporter SstT (408 aa).

9 consecutive transmembrane segments (helical) span residues 11 to 31 (LANG…VSLA), 43 to 63 (FLGS…VFIL), 82 to 102 (IVVL…VLSM), 141 to 161 (ALMT…GLAL), 192 to 212 (IGIF…AIAG), 216 to 236 (LLAV…PLIV), 290 to 310 (IPLG…VLTL), 316 to 336 (LGIQ…AISA), and 363 to 383 (VAMQ…AAET).

This sequence belongs to the dicarboxylate/amino acid:cation symporter (DAACS) (TC 2.A.23) family.

The protein resides in the cell inner membrane. It catalyses the reaction L-serine(in) + Na(+)(in) = L-serine(out) + Na(+)(out). The catalysed reaction is L-threonine(in) + Na(+)(in) = L-threonine(out) + Na(+)(out). Involved in the import of serine and threonine into the cell, with the concomitant import of sodium (symport system). The sequence is that of Serine/threonine transporter SstT from Shewanella sp. (strain ANA-3).